Consider the following 185-residue polypeptide: Putative manganese efflux pump MntP (185 aa).

The next 6 membrane-spanning stretches (helical) occupy residues 4–24 (LTSS…ALAI), 36–56 (ALVI…AGWI), 65–85 (ISSY…IKMI), 105–125 (VILL…SFGV), 130–150 (VLMP…AGVF), and 165–185 (IFGG…ILPL).

This sequence belongs to the MntP (TC 9.B.29) family.

It localises to the cell membrane. Probably functions as a manganese efflux pump. The polypeptide is Putative manganese efflux pump MntP (Methanoregula boonei (strain DSM 21154 / JCM 14090 / 6A8)).